The sequence spans 61 residues: Photosystem II reaction center protein K (61 aa).

Positions 1–24 (MINIFSFICIYLHSALYSSSFFFG) are excised as a propeptide. The helical transmembrane segment at 40–60 (MPVIPLFFFLLAFVWQAAVSF) threads the bilayer.

Belongs to the PsbK family. As to quaternary structure, PSII is composed of 1 copy each of membrane proteins PsbA, PsbB, PsbC, PsbD, PsbE, PsbF, PsbH, PsbI, PsbJ, PsbK, PsbL, PsbM, PsbT, PsbX, PsbY, PsbZ, Psb30/Ycf12, at least 3 peripheral proteins of the oxygen-evolving complex and a large number of cofactors. It forms dimeric complexes.

Its subcellular location is the plastid. It localises to the chloroplast thylakoid membrane. Its function is as follows. One of the components of the core complex of photosystem II (PSII). PSII is a light-driven water:plastoquinone oxidoreductase that uses light energy to abstract electrons from H(2)O, generating O(2) and a proton gradient subsequently used for ATP formation. It consists of a core antenna complex that captures photons, and an electron transfer chain that converts photonic excitation into a charge separation. The chain is Photosystem II reaction center protein K from Pelargonium hortorum (Common geranium).